A 177-amino-acid polypeptide reads, in one-letter code: R-phycoerythrin beta chain (177 aa).

Positions 35 and 39 each coordinate (2R,3E)-phycoerythrobilin. The phycourobilin site is built by cysteine 50, aspartate 54, and cysteine 61. (2R,3E)-phycoerythrobilin contacts are provided by residues asparagine 72, 77–78 (RR), cysteine 82, and 84–85 (RD). N4-methylasparagine is present on asparagine 72. 147 to 148 (SG) is a phycourobilin binding site. Position 158 (cysteine 158) interacts with (2R,3E)-phycoerythrobilin.

This sequence belongs to the phycobiliprotein family. As to quaternary structure, heterododecamer of 6 alpha and 6 beta chains. The basic functional unit of phycobiliproteins is a ring-shaped hexamer formed from two back-to-back trimers contacting via the alpha chain subunits. The trimers are composed of alpha/beta subunit heterodimers arranged around a three-fold axis of symmetry. The phycoerythrins also contain a gamma subunit which is located in the center of the hexamer. In terms of processing, contains two covalently linked phycoerythrobilin chromophores and one covalently linked phycourobilin chromophore.

It is found in the plastid. The protein resides in the chloroplast thylakoid membrane. Functionally, light-harvesting photosynthetic tetrapyrrole chromophore-protein from the phycobiliprotein complex. This Griffithsia monilis (Red alga) protein is R-phycoerythrin beta chain (cpeB).